A 298-amino-acid chain; its full sequence is MEIKNLTTEQRNPASIHIDTVSTVEMVKIMNEEDQKVALAVGNQDEQIARAIDEAANRYKKGGRLIYLGAGTSGRLGVLDAAELVPTYGIKPERAIGLIAGGPGAMYKAVEGAEDDTNLGAEDLKDLNLNSQDIVLGLAASGRTPYVIGGLEYANQIGAFTISIACVKDSEIGKHAEVAIEAVVGPEIVTGSTRMKSGTAQKMILNMISTGVMIRQGKVFENVMIDVMPTNSKLVDRASRIISAVTDATQEEALQTLKKAENNVPLAITMIKTESNKDEAQKLLEQYNGNVSEVIKNN.

One can recognise an SIS domain in the interval alanine 55 to lysine 218. The Proton donor role is filled by glutamate 83. Glutamate 114 is an active-site residue.

It belongs to the GCKR-like family. MurNAc-6-P etherase subfamily. In terms of assembly, homodimer.

The catalysed reaction is N-acetyl-D-muramate 6-phosphate + H2O = N-acetyl-D-glucosamine 6-phosphate + (R)-lactate. Its pathway is amino-sugar metabolism; N-acetylmuramate degradation. Functionally, specifically catalyzes the cleavage of the D-lactyl ether substituent of MurNAc 6-phosphate, producing GlcNAc 6-phosphate and D-lactate. This chain is N-acetylmuramic acid 6-phosphate etherase, found in Lactobacillus acidophilus (strain ATCC 700396 / NCK56 / N2 / NCFM).